Reading from the N-terminus, the 207-residue chain is Thymidylate kinase (207 aa).

12–19 (GVDGAGKS) contributes to the ATP binding site.

The protein belongs to the thymidylate kinase family.

The catalysed reaction is dTMP + ATP = dTDP + ADP. Its function is as follows. Phosphorylation of dTMP to form dTDP in both de novo and salvage pathways of dTTP synthesis. The polypeptide is Thymidylate kinase (Bordetella petrii (strain ATCC BAA-461 / DSM 12804 / CCUG 43448)).